We begin with the raw amino-acid sequence, 670 residues long: WD repeat-containing protein 48 homolog (670 aa).

WD repeat units follow at residues 13–52 (RHRN…SQEP), 59–98 (HHND…CMST), 101–140 (THRD…ALTA), 152–191 (GSKD…KIAK), 194–233 (GHTE…CIQT), 236–275 (VHSE…NSVL), and 278–317 (EERA…KLSN). The interval 321–348 (SSNSSINSGGGGDGTPVTNSASNATPAS) is disordered. The span at 338 to 348 (TNSASNATPAS) shows a compositional bias: low complexity. A WD 8 repeat occupies 359–398 (KGGAAIKKYHVLNDKRFMLTKDSEQNVAIYDVLKVKKVED). Positions 613–625 (GGGGGSSTGGGGN) are enriched in gly residues. Residues 613 to 645 (GGGGGSSTGGGGNSNSSQNNSQSDANSEGSQVP) form a disordered region. The span at 626-635 (SNSSQNNSQS) shows a compositional bias: low complexity.

Belongs to the WD repeat WDR48 family. Catalytic component of the Usp12-46 deubiquitylase complex consisting of Usp12-46, Wdr20 and Uaf1; regulatory subunit that, together wtih Wdr20, stabilizes Usp12-46. The Usp12-46 deubiquitylase complex associates with arr/arrow; the interaction leads to deubiquitination and stabilization of arr/arrow.

Functionally, regulatory component of the Usp12-46 deubiquitylase complex. activates deubiquitination by increasing the catalytic turnover without increasing the affinity of deubiquitinating enzymes for the substrate. The complex deubiquitylates the wg/wingless-signaling receptor arr/arrow, which stabilizes the receptor and increases its concentration at the cell surface; this enhances the sensitivity of cells to wg/wingless-signal stimulation. This increases the amplitude and spatial range of the signaling response to the wg/wingless morphogen gradient, facilitating the precise concentration-dependent regulation of its target genes. Together with Wdr20 and Usp12-46 required for wg/wingless-mediated signaling in the wing imaginal disc and for wg/wingless-dependent regulation of intestinal stem cell proliferation. In Culex quinquefasciatus (Southern house mosquito), this protein is WD repeat-containing protein 48 homolog.